The following is a 305-amino-acid chain: uncharacterized protein (305 aa).

Residues 255 to 305 (RCHRAGLRSPPRTREPLWSLGPSGGEAAGEAPGGKGPPTPVLPHARRAGAA) form a disordered region. Over residues 276–288 (PSGGEAAGEAPGG) the composition is skewed to gly residues.

This is an uncharacterized protein from Streptomyces fradiae (Streptomyces roseoflavus).